The primary structure comprises 1464 residues: MAGIIKKQILKHLSRFTKNLSPDKINLSTLKGEGELKNLELDEEVLQNMLDLPTWLAINKVFCNKASIRIPWTKLKTHPICLSLDKVIMEMSTCEEPRSPNGPSPIATASGQSEYGFAEKVVEGISVSVNSIVIRIGAKAFNASFELSQLRIYSVNAHWEHGDLRFTRIQDPQRGEVLTFKEINWQMIRIEADATQSSHLEIMCAPVRLITNQSKIRVTLKRRLKDCNVIATKLVLILDDLLWVLTDSQLKAMVQYAKSLSEAIEKSTEQRKSMAPEPTQSSTVVASAQQVKTTQTSNAPDVNDAIVKLFNDFDVKETSHHLVISHLDLHICDDIHAKEKESNRRITGGAMQLSFTQLTIDYYPYHKAGDSCNHWMYFSDATKTKNGWANELLHEFECNVEMLKQAVKDHNVGSPPKSPTHASPQHTQTEKDYPLKGTCRTPSVLSQQSKAKLMSSSVVVRLADFNIYQVSTAEQCRSSPKSMICCNKKSLYLPQEMSAVYIEFTEYYYPDGKDFPIPSPNLYSQLNALQFTVDERSILWLNQFLLDLKQSLNQFMAVYKLNDNSKSDEHVDVRVDGLMLKFVIPSEVKSECHQDQPRAISIQSSEMIATNTRHCPNCRHSDLEALFQDFKDCDFFSKTYTSFPKSCDNFNLLHPIFQRHAHEQDTKMHEIYKGNITPQLNKNTLKTSAATDVWAVYFSQFWIDYEGMKSGKGRPISFVDSFPLSIWICQPTRYAESQKEPQTCNQVSLNTSQSESSDLAGRLKRKKLLKEYYSTESEPLTNGGQKPSSSDTFFRFSPSSSEADIHLLVHVHKHVSMQINHYQYLLLLFLHESLILLSENLRKDVEAVTGSPASQTSICIGILLRSAELALLLHPVDQANTLKSPVSESVSPVVPDYLPTENGDFLSSKRKQISRDINRIRSVTVNHMSDNRSMSVDLSHIPLKDPLLFKSASDTNLQKGISFMDYLSDKHLGKISEDESSGLVYKSGSGEIGSETSDKKDSFYTDSSSILNYREDSNILSFDSDGNQNILSSTLTSKGNETIESIFKAEDLLPEAASLSENLDISKEETPPVRTLKSQSSLSGKPKERCPPNLAPLCVSYKNMKRSSSQMSLDTISLDSMILEEQLLESDGSDSHMFLEKGNKKNSTTNYRGTAESVNAGANLQNYGETSPDAISTNSEGAQENHDDLMSVVVFKITGVNGEIDIRGEDTEICLQVNQVTPDQLGNISLRHYLCNRPVGSDQKAVIHSKSSPEISLRFESGPGAVIHSLLAEKNGFLQCHIENFSTEFLTSSLMNIQHFLEDETVATVMPMKIQVSNTKINLKDDSPRSSTVSLEPAPVTVHIDHLVVERSDDGSFHIRDSHMLNTGNDLKENVKSDSVLLTSGKYDLKKQRSVTQATQTSPGVPWPSQSANFPEFSFDFTREQLMEENESLKQELAKAKMALAEAHLEKDALLHHIKKMTVE.

The Chorein N-terminal domain occupies 3-94 (GIIKKQILKH…DKVIMEMSTC (92 aa)). Disordered regions lie at residues 267–297 (STEQRKSMAPEPTQSSTVVASAQQVKTTQTS) and 409–436 (DHNVGSPPKSPTHASPQHTQTEKDYPLK). Residues 278–297 (PTQSSTVVASAQQVKTTQTS) show a composition bias toward polar residues. 5 positions are modified to phosphoserine: serine 414, serine 418, serine 774, serine 935, and serine 1009. Disordered stretches follow at residues 1066-1089 (SKEETPPVRTLKSQSSLSGKPKER), 1164-1183 (LQNYGETSPDAISTNSEGAQ), and 1392-1413 (QRSVTQATQTSPGVPWPSQSAN). Composition is skewed to polar residues over residues 1164–1182 (LQNYGETSPDAISTNSEGA) and 1394–1413 (SVTQATQTSPGVPWPSQSAN). The stretch at 1418 to 1456 (SFDFTREQLMEENESLKQELAKAKMALAEAHLEKDALLH) forms a coiled coil.

As to quaternary structure, monomer. Homodimer (via N-terminus). Associates with the Golgi-associated retrograde protein (GARP) complex. Interacts with GARP complex component VPS52. Interacts (via C-terminal coiled-coil domain) with STX6.

The protein resides in the cytoplasm. It is found in the cytosol. It localises to the early endosome. Its function is as follows. Tube-forming lipid transport protein which mediates the transfer of lipids between membranes at organelle contact sites. Required for retrograde traffic of vesicle clusters in the early endocytic pathway to the Golgi complex. The chain is Bridge-like lipid transfer protein family member 3B from Homo sapiens (Human).